An 86-amino-acid chain; its full sequence is DNA-directed RNA polymerase subunit omega (86 aa).

This sequence belongs to the RNA polymerase subunit omega family. As to quaternary structure, the RNAP catalytic core consists of 2 alpha, 1 beta, 1 beta' and 1 omega subunit. When a sigma factor is associated with the core the holoenzyme is formed, which can initiate transcription.

The enzyme catalyses RNA(n) + a ribonucleoside 5'-triphosphate = RNA(n+1) + diphosphate. In terms of biological role, promotes RNA polymerase assembly. Latches the N- and C-terminal regions of the beta' subunit thereby facilitating its interaction with the beta and alpha subunits. In Psychrobacter arcticus (strain DSM 17307 / VKM B-2377 / 273-4), this protein is DNA-directed RNA polymerase subunit omega.